Reading from the N-terminus, the 384-residue chain is Dual-specificity RNA methyltransferase RlmN (384 aa).

Catalysis depends on Glu-105, which acts as the Proton acceptor. The 240-residue stretch at 111–350 folds into the Radical SAM core domain; sequence EDDRATLCVS…TIVRKTRGDD (240 aa). Cys-118 and Cys-355 are joined by a disulfide. [4Fe-4S] cluster is bound by residues Cys-125, Cys-129, and Cys-132. S-adenosyl-L-methionine-binding positions include 179–180, Ser-211, 233–235, and Asn-312; these read GE and SLH. Cys-355 (S-methylcysteine intermediate) is an active-site residue.

It belongs to the radical SAM superfamily. RlmN family. [4Fe-4S] cluster is required as a cofactor.

It localises to the cytoplasm. The enzyme catalyses adenosine(2503) in 23S rRNA + 2 reduced [2Fe-2S]-[ferredoxin] + 2 S-adenosyl-L-methionine = 2-methyladenosine(2503) in 23S rRNA + 5'-deoxyadenosine + L-methionine + 2 oxidized [2Fe-2S]-[ferredoxin] + S-adenosyl-L-homocysteine. The catalysed reaction is adenosine(37) in tRNA + 2 reduced [2Fe-2S]-[ferredoxin] + 2 S-adenosyl-L-methionine = 2-methyladenosine(37) in tRNA + 5'-deoxyadenosine + L-methionine + 2 oxidized [2Fe-2S]-[ferredoxin] + S-adenosyl-L-homocysteine. In terms of biological role, specifically methylates position 2 of adenine 2503 in 23S rRNA and position 2 of adenine 37 in tRNAs. m2A2503 modification seems to play a crucial role in the proofreading step occurring at the peptidyl transferase center and thus would serve to optimize ribosomal fidelity. This is Dual-specificity RNA methyltransferase RlmN from Escherichia coli O157:H7.